The chain runs to 218 residues: Peptide deformylase (218 aa).

Fe cation-binding residues include cysteine 130 and histidine 172. Glutamate 173 is a catalytic residue. Residue histidine 176 participates in Fe cation binding.

This sequence belongs to the polypeptide deformylase family. Fe(2+) serves as cofactor.

It catalyses the reaction N-terminal N-formyl-L-methionyl-[peptide] + H2O = N-terminal L-methionyl-[peptide] + formate. Functionally, removes the formyl group from the N-terminal Met of newly synthesized proteins. Requires at least a dipeptide for an efficient rate of reaction. N-terminal L-methionine is a prerequisite for activity but the enzyme has broad specificity at other positions. In Bifidobacterium adolescentis (strain ATCC 15703 / DSM 20083 / NCTC 11814 / E194a), this protein is Peptide deformylase.